The following is a 124-amino-acid chain: Heat-labile enterotoxin B chain (124 aa).

Residues 1-21 form the signal peptide; sequence MNKVKCYVLFTALLSSLYAHG. Cysteine 30 and cysteine 107 are disulfide-bonded.

As to quaternary structure, heterohexamer of one A chain and of five B chains.

Its function is as follows. The biological activity of the toxin is produced by the A chain, which activates intracellular adenyl cyclase. The polypeptide is Heat-labile enterotoxin B chain (eltB) (Escherichia coli).